The chain runs to 36 residues: Termicin (36 aa).

3 cysteine pairs are disulfide-bonded: C2-C24, C7-C29, and C11-C31. G36 is modified (glycine amide).

As to expression, expressed in salivary glands and hemocytes.

Its subcellular location is the secreted. Functionally, weak activity against Gram-positive bacteria B.megaterium, S.pyogenes and M.luteus, strong activity against yeasts C.albicans, C.neoformans and S.cerevisiae and filamentous fungi F.oxysporum, F.culmorum, N.crassa and N.hematococca. Less active against filamentous fungus T.viride. Inactive against Gram-positive bacteria A.viridans and S.aureus, filamentous fungi A.fumigatus and B.bassiana and yeast C.glabrata. This is Termicin from Pseudacanthotermes spiniger.